The primary structure comprises 195 residues: Imidazoleglycerol-phosphate dehydratase (195 aa).

The protein belongs to the imidazoleglycerol-phosphate dehydratase family.

Its subcellular location is the cytoplasm. The enzyme catalyses D-erythro-1-(imidazol-4-yl)glycerol 3-phosphate = 3-(imidazol-4-yl)-2-oxopropyl phosphate + H2O. It functions in the pathway amino-acid biosynthesis; L-histidine biosynthesis; L-histidine from 5-phospho-alpha-D-ribose 1-diphosphate: step 6/9. This is Imidazoleglycerol-phosphate dehydratase from Bacillus cytotoxicus (strain DSM 22905 / CIP 110041 / 391-98 / NVH 391-98).